Consider the following 285-residue polypeptide: Putative lipoprotein SCO4650 (285 aa).

The N-terminal stretch at 1-20 (MTGTTARRTVVSVAVSAALA) is a signal peptide. A lipid anchor (N-palmitoyl cysteine) is attached at C21. C21 carries S-diacylglycerol cysteine lipidation. The tract at residues 27-63 (GPGGSDDAGHSTGPTGSARPSASAPASSRAPALTGPS) is disordered. Over residues 43-58 (SARPSASAPASSRAPA) the composition is skewed to low complexity.

It localises to the cell membrane. The chain is Putative lipoprotein SCO4650 from Streptomyces coelicolor (strain ATCC BAA-471 / A3(2) / M145).